Consider the following 254-residue polypeptide: Triosephosphate isomerase (254 aa).

Residue 9 to 11 (NWK) coordinates substrate. The active-site Electrophile is the H96. E169 acts as the Proton acceptor in catalysis. Residues G175, S215, and 236–237 (GG) contribute to the substrate site.

It belongs to the triosephosphate isomerase family. Homodimer.

The protein localises to the cytoplasm. The catalysed reaction is D-glyceraldehyde 3-phosphate = dihydroxyacetone phosphate. The protein operates within carbohydrate biosynthesis; gluconeogenesis. It participates in carbohydrate degradation; glycolysis; D-glyceraldehyde 3-phosphate from glycerone phosphate: step 1/1. Its function is as follows. Involved in the gluconeogenesis. Catalyzes stereospecifically the conversion of dihydroxyacetone phosphate (DHAP) to D-glyceraldehyde-3-phosphate (G3P). The sequence is that of Triosephosphate isomerase from Borrelia hermsii (strain HS1 / DAH).